We begin with the raw amino-acid sequence, 507 residues long: Beta-glucosidase 13 (507 aa).

A signal peptide spans 1–22; it reads MRTKYFSLLVFIIVLASNEVIA. Gln-50 is an a beta-D-glucoside binding site. Asn-81 carries an N-linked (GlcNAc...) asparagine glycan. Residues His-154 and 199 to 200 each bind a beta-D-glucoside; that span reads NE. Catalysis depends on Glu-200, which acts as the Proton donor. Cysteines 219 and 227 form a disulfide. An N-linked (GlcNAc...) asparagine glycan is attached at Asn-226. Tyr-344 serves as a coordination point for a beta-D-glucoside. Residue Asn-358 is glycosylated (N-linked (GlcNAc...) asparagine). Residues Glu-414, Trp-459, 466-467, and Phe-475 contribute to the a beta-D-glucoside site; that span reads EW. The active-site Nucleophile is the Glu-414.

The protein belongs to the glycosyl hydrolase 1 family.

The catalysed reaction is Hydrolysis of terminal, non-reducing beta-D-glucosyl residues with release of beta-D-glucose.. This Arabidopsis thaliana (Mouse-ear cress) protein is Beta-glucosidase 13.